Here is a 275-residue protein sequence, read N- to C-terminus: Dolichyl-diphosphooligosaccharide--protein glycosyltransferase subunit delta (275 aa).

The first 18 residues, 1 to 18 (MKTSVFIAIFNLLVCALA), serve as a signal peptide directing secretion. A run of 3 helical transmembrane segments spans residues 179–199 (VFII…VGFI), 214–234 (VQLL…LNFV), and 241–261 (SIFT…YFGV).

Belongs to the SWP1 family. In terms of assembly, component of the oligosaccharyltransferase (OST) complex.

The protein localises to the endoplasmic reticulum membrane. It participates in protein modification; protein glycosylation. Its function is as follows. Subunit of the oligosaccharyl transferase (OST) complex that catalyzes the initial transfer of a defined glycan (Glc(3)Man(9)GlcNAc(2) in eukaryotes) from the lipid carrier dolichol-pyrophosphate to an asparagine residue within an Asn-X-Ser/Thr consensus motif in nascent polypeptide chains, the first step in protein N-glycosylation. N-glycosylation occurs cotranslationally and the complex associates with the Sec61 complex at the channel-forming translocon complex that mediates protein translocation across the endoplasmic reticulum (ER). All subunits are required for a maximal enzyme activity. Plays a role in cell wall integrity and in engulfment by macrophages. In Candida albicans (strain SC5314 / ATCC MYA-2876) (Yeast), this protein is Dolichyl-diphosphooligosaccharide--protein glycosyltransferase subunit delta.